A 119-amino-acid polypeptide reads, in one-letter code: Large ribosomal subunit protein bL20 (119 aa).

The protein belongs to the bacterial ribosomal protein bL20 family.

Functionally, binds directly to 23S ribosomal RNA and is necessary for the in vitro assembly process of the 50S ribosomal subunit. It is not involved in the protein synthesizing functions of that subunit. This Latilactobacillus sakei subsp. sakei (strain 23K) (Lactobacillus sakei subsp. sakei) protein is Large ribosomal subunit protein bL20.